The chain runs to 640 residues: Portal protein (640 aa).

Belongs to the herpesviridae portal protein family. As to quaternary structure, homododecamerizes. Interacts with terminase subunits TRM1 and TRM3.

It is found in the virion. The protein localises to the host nucleus. Its function is as follows. Forms a portal in the viral capsid through which viral DNA is translocated during DNA packaging. Assembles as a dodecamer at a single fivefold axe of the T=16 icosahedric capsid. Binds to the molecular motor that translocates the viral DNA, termed terminase. The protein is Portal protein (U76) of Human herpesvirus 7 (strain JI) (HHV-7).